Consider the following 492-residue polypeptide: N-succinylglutamate 5-semialdehyde dehydrogenase (492 aa).

220–225 (GSANTG) contributes to the NAD(+) binding site. Active-site residues include Glu-243 and Cys-277.

Belongs to the aldehyde dehydrogenase family. AstD subfamily.

It carries out the reaction N-succinyl-L-glutamate 5-semialdehyde + NAD(+) + H2O = N-succinyl-L-glutamate + NADH + 2 H(+). Its pathway is amino-acid degradation; L-arginine degradation via AST pathway; L-glutamate and succinate from L-arginine: step 4/5. Functionally, catalyzes the NAD-dependent reduction of succinylglutamate semialdehyde into succinylglutamate. In Escherichia coli O6:K15:H31 (strain 536 / UPEC), this protein is N-succinylglutamate 5-semialdehyde dehydrogenase.